Consider the following 432-residue polypeptide: Enolase (432 aa).

Residue Q166 coordinates (2R)-2-phosphoglycerate. E210 serves as the catalytic Proton donor. 3 residues coordinate Mg(2+): D247, E288, and D315. (2R)-2-phosphoglycerate-binding residues include K340, R369, S370, and K391. K340 acts as the Proton acceptor in catalysis.

Belongs to the enolase family. Mg(2+) serves as cofactor.

It localises to the cytoplasm. The protein localises to the secreted. It is found in the cell surface. The catalysed reaction is (2R)-2-phosphoglycerate = phosphoenolpyruvate + H2O. Its pathway is carbohydrate degradation; glycolysis; pyruvate from D-glyceraldehyde 3-phosphate: step 4/5. Functionally, catalyzes the reversible conversion of 2-phosphoglycerate (2-PG) into phosphoenolpyruvate (PEP). It is essential for the degradation of carbohydrates via glycolysis. The protein is Enolase of Aeropyrum pernix (strain ATCC 700893 / DSM 11879 / JCM 9820 / NBRC 100138 / K1).